The chain runs to 208 residues: Large ribosomal subunit protein uL3 (208 aa).

Glutamine 149 carries the N5-methylglutamine modification.

Belongs to the universal ribosomal protein uL3 family. Part of the 50S ribosomal subunit. Forms a cluster with proteins L14 and L19. In terms of processing, methylated by PrmB.

One of the primary rRNA binding proteins, it binds directly near the 3'-end of the 23S rRNA, where it nucleates assembly of the 50S subunit. The chain is Large ribosomal subunit protein uL3 from Histophilus somni (strain 129Pt) (Haemophilus somnus).